The sequence spans 250 residues: Sulfate transporter CysZ (250 aa).

4 helical membrane passes run 26–46, 71–91, 150–170, and 211–231; these read LFVL…IYLA, ILWP…FTML, LFIL…WLLF, and IVYL…AAVA.

It belongs to the CysZ family.

The protein localises to the cell inner membrane. In terms of biological role, high affinity, high specificity proton-dependent sulfate transporter, which mediates sulfate uptake. Provides the sulfur source for the cysteine synthesis pathway. This Pseudomonas fluorescens (strain Pf0-1) protein is Sulfate transporter CysZ.